A 324-amino-acid polypeptide reads, in one-letter code: Malate dehydrogenase (324 aa).

NAD(+)-binding positions include 7 to 13 (GAAGGIG) and Asp-34. Substrate-binding residues include Arg-88 and Arg-94. Residues Asn-101 and 124-126 (VTN) each bind NAD(+). Residues Asn-126 and Arg-160 each coordinate substrate. Catalysis depends on His-184, which acts as the Proton acceptor. Met-238 is a binding site for NAD(+).

Belongs to the LDH/MDH superfamily. MDH type 1 family. As to quaternary structure, homodimer.

The enzyme catalyses (S)-malate + NAD(+) = oxaloacetate + NADH + H(+). Its function is as follows. Catalyzes the reversible oxidation of malate to oxaloacetate. This chain is Malate dehydrogenase, found in Haemophilus ducreyi (strain 35000HP / ATCC 700724).